The primary structure comprises 409 residues: Serine/threonine transporter SstT (409 aa).

9 helical membrane-spanning segments follow: residues 15–35 (LSLV…ALLA), 49–69 (FVSA…MASI), 82–102 (PILV…VIAS), 142–162 (ALMN…GVAI), 193–213 (LGIF…ALLG), 218–238 (LAVL…LIVF), 301–321 (GAAI…GIAV), 331–351 (VVAA…LLLI), and 357–377 (LFGI…IIGV).

This sequence belongs to the dicarboxylate/amino acid:cation symporter (DAACS) (TC 2.A.23) family.

It localises to the cell inner membrane. It carries out the reaction L-serine(in) + Na(+)(in) = L-serine(out) + Na(+)(out). It catalyses the reaction L-threonine(in) + Na(+)(in) = L-threonine(out) + Na(+)(out). Involved in the import of serine and threonine into the cell, with the concomitant import of sodium (symport system). In Pseudomonas fluorescens (strain ATCC BAA-477 / NRRL B-23932 / Pf-5), this protein is Serine/threonine transporter SstT.